We begin with the raw amino-acid sequence, 51 residues long: Protein 1.4 (51 aa).

The signal sequence occupies residues 1–23; sequence MFKKVGKFLAALAAILTLAYILA. The chain crosses the membrane as a helical span at residues 28-48; it reads VALVVVGACYLAAVCACVWSI.

The protein localises to the host membrane. The sequence is that of Protein 1.4 from Escherichia coli (Bacteriophage T7).